A 697-amino-acid chain; its full sequence is Elongation factor G (697 aa).

Residues 8 to 282 (EDYRNIGIMA…AIVDYLPSPL (275 aa)) enclose the tr-type G domain. Residues 17–24 (AHIDAGKT), 81–85 (DTPGH), and 135–138 (NKMD) each bind GTP.

This sequence belongs to the TRAFAC class translation factor GTPase superfamily. Classic translation factor GTPase family. EF-G/EF-2 subfamily.

The protein localises to the cytoplasm. In terms of biological role, catalyzes the GTP-dependent ribosomal translocation step during translation elongation. During this step, the ribosome changes from the pre-translocational (PRE) to the post-translocational (POST) state as the newly formed A-site-bound peptidyl-tRNA and P-site-bound deacylated tRNA move to the P and E sites, respectively. Catalyzes the coordinated movement of the two tRNA molecules, the mRNA and conformational changes in the ribosome. The sequence is that of Elongation factor G from Metamycoplasma arthritidis (strain 158L3-1) (Mycoplasma arthritidis).